We begin with the raw amino-acid sequence, 73 residues long: Bacterioferritin-associated ferredoxin (73 aa).

The [2Fe-2S] cluster site is built by cysteine 4 and cysteine 6. Arginine 26 and arginine 29 together coordinate phosphate. [2Fe-2S] cluster contacts are provided by cysteine 38 and cysteine 41. Residue lysine 46 coordinates phosphate.

This sequence belongs to the Bfd family. As to quaternary structure, monomer. Interacts with BfrB; up to 12 Bfd proteins can bind to the BfrB bacterioferritin complex (BFR). One Bfd protein binds to a BfrB dimer in the BFR, with the [2Fe-2S] cluster positioned about 22 Angstroms above the heme of BfrB. Does not interact with FtnA. It depends on [2Fe-2S] cluster as a cofactor. Phosphate serves as cofactor.

Its function is as follows. Required for mobilization of iron from the bacterioferritin (BFR) complex, composed of BfrB and FtnA in varying proportions; mobilization requires the [2Fe-2S] cluster of this protein. Reduction of the BfrB heme group occurs in the presence of Bfd, strongly suggesting that the BfrB-Bfd complex allows heme to mediate electron transfer from FPR to the Fe(3+) iron core in the BFR prior to its release as Fe(2+). The chain is Bacterioferritin-associated ferredoxin from Pseudomonas aeruginosa (strain ATCC 15692 / DSM 22644 / CIP 104116 / JCM 14847 / LMG 12228 / 1C / PRS 101 / PAO1).